The following is a 97-amino-acid chain: Co-chaperonin GroES (97 aa).

This sequence belongs to the GroES chaperonin family. In terms of assembly, heptamer of 7 subunits arranged in a ring. Interacts with the chaperonin GroEL.

It is found in the cytoplasm. In terms of biological role, together with the chaperonin GroEL, plays an essential role in assisting protein folding. The GroEL-GroES system forms a nano-cage that allows encapsulation of the non-native substrate proteins and provides a physical environment optimized to promote and accelerate protein folding. GroES binds to the apical surface of the GroEL ring, thereby capping the opening of the GroEL channel. The polypeptide is Co-chaperonin GroES (Pseudomonas putida (strain ATCC 700007 / DSM 6899 / JCM 31910 / BCRC 17059 / LMG 24140 / F1)).